Consider the following 639-residue polypeptide: Kinesin-like protein KIF22 (639 aa).

One can recognise a Kinesin motor domain in the interval 18 to 345; the sequence is RVRVAVRLRP…LNFAAKSKQI (328 aa). ATP is bound at residue 102 to 109; it reads GPTGAGKT. Residues 358 to 400 form a disordered region; that stretch reads IAALPAMKRPREEAETAAGSRQRKKSKTDSTESSPNTSMDAAS. Residues 388 to 397 show a composition bias toward polar residues; it reads TESSPNTSMD. A coiled-coil region spans residues 439–484; sequence KRERMALLKKWEESQMEIERLKEKQKELEQKAIEAEARLEKSTNSD. The short motif at 549–552 is the Important for regulated proteolytic degradation element; it reads GREN.

It belongs to the TRAFAC class myosin-kinesin ATPase superfamily. Kinesin family. Ubiquitinated, leading to its subsequent proteasomal degradation.

Its subcellular location is the nucleus. It is found in the cytoplasm. The protein resides in the cytoskeleton. Its function is as follows. Kinesin family member that is involved in spindle formation and the movements of chromosomes during mitosis and meiosis. Binds to microtubules and to DNA. The chain is Kinesin-like protein KIF22 (kif22) from Xenopus tropicalis (Western clawed frog).